The primary structure comprises 620 residues: Zinc finger protein GLIS1 (620 aa).

The tract at residues 108-132 (PLTGDLGGPSKRARPGPASTDSHEG) is disordered. The segment at 195–220 (QACRWVDCCAAYEQQEELVRHIEKSH) adopts a C2H2-type 1 zinc-finger fold. The C2H2-type 2; atypical zinc-finger motif lies at 229 to 256 (FTCFWAGCVRRYKPFNARYKLLIHMRVH). 3 C2H2-type zinc fingers span residues 262–286 (NKCM…LRSH), 292–316 (YLCQ…QRTH), and 322–346 (YACQ…VKAH). Residues 340–356 (RKHVKAHSAKEQQVRKK) carry the Bipartite nuclear localization signal motif. A disordered region spans residues 414–515 (ASGLLPPAHD…PPLPSPQGYQ (102 aa)). The span at 477-488 (SSQSHSPGGQPF) shows a compositional bias: low complexity. Over residues 489–510 (PTLPSKPSYPPFQSPPPPPLPS) the composition is skewed to pro residues.

The protein belongs to the GLI C2H2-type zinc-finger protein family. As to quaternary structure, interacts with KLF4. Interacts with POU5F1 and/or POU5F1B. Interacts with SOX2.

The protein resides in the nucleus. In terms of biological role, acts both as a repressor and an activator of transcription. Binds to the consensus sequence 5'-GACCACCCAC-3'. By controlling the expression of genes involved in cell differentiation inhibits the lineage commitment of multipotent cells. Prevents, for instance, the differentiation of multipotent mesenchymal cells into adipocyte and osteoblast. The sequence is that of Zinc finger protein GLIS1 from Homo sapiens (Human).